The primary structure comprises 255 residues: Putative glycyl-radical enzyme activating enzyme MJ1632 (255 aa).

One can recognise a Radical SAM core domain in the interval 30 to 245 (SHISLSDKIT…SNVSCSLDFK (216 aa)). Cys-45, Cys-49, and Cys-52 together coordinate [4Fe-4S] cluster. Residues 51–53 (YCF), Gly-88, and 134–136 (DLK) contribute to the S-adenosyl-L-methionine site.

The protein belongs to the organic radical-activating enzymes family. [4Fe-4S] cluster is required as a cofactor.

The catalysed reaction is glycyl-[protein] + reduced [flavodoxin] + S-adenosyl-L-methionine = glycin-2-yl radical-[protein] + semiquinone [flavodoxin] + 5'-deoxyadenosine + L-methionine + H(+). This Methanocaldococcus jannaschii (strain ATCC 43067 / DSM 2661 / JAL-1 / JCM 10045 / NBRC 100440) (Methanococcus jannaschii) protein is Putative glycyl-radical enzyme activating enzyme MJ1632.